We begin with the raw amino-acid sequence, 604 residues long: uncharacterized protein (604 aa).

An N-terminal signal peptide occupies residues 1–19 (MIVRILLLFIALFTFGVQA).

This sequence to H.influenzae HbpA.

This is an uncharacterized protein from Escherichia coli (strain K12).